Here is a 348-residue protein sequence, read N- to C-terminus: Doublesex- and mab-3-related transcription factor dmd-10 (348 aa).

2 consecutive DNA-binding regions (DM) follow at residues 43 to 91 and 119 to 166; these read CQRC…YNQF and CQKC…KIRR. The interval 316–348 is disordered; it reads SMSMSSSPSKDDESGDEDSDGLNSNSIIDVITV.

The protein belongs to the DMRT family. Dimorphically expressed in the dimorphically connected interneuron AVG; expression is observed in the AVG in males, but not in hermaphrodites.

Its subcellular location is the nucleus. Functionally, transcription factor. Plays a role in neuronal signaling in polymodal sensory neuron ASH, downstream of sensory receptor activation. Required for maintenance of AVG synapses. The polypeptide is Doublesex- and mab-3-related transcription factor dmd-10 (Caenorhabditis elegans).